Consider the following 138-residue polypeptide: Large ribosomal subunit protein uL16 (138 aa).

The segment covering 1–17 (MLQPKRTKFRKQHKGRN) has biased composition (basic residues). A disordered region spans residues 1–22 (MLQPKRTKFRKQHKGRNRGVAT).

Belongs to the universal ribosomal protein uL16 family. In terms of assembly, part of the 50S ribosomal subunit.

Functionally, binds 23S rRNA and is also seen to make contacts with the A and possibly P site tRNAs. The sequence is that of Large ribosomal subunit protein uL16 from Acidithiobacillus ferrooxidans (strain ATCC 23270 / DSM 14882 / CIP 104768 / NCIMB 8455) (Ferrobacillus ferrooxidans (strain ATCC 23270)).